Consider the following 164-residue polypeptide: Protein HIT1 (164 aa).

Zn(2+) contacts are provided by Cys8, Cys11, Cys28, and Cys32. An HIT-type; degenerate zinc finger spans residues 8–49 (CGICRGVDGKYKCPKCGVRYCSLKCYKDAAKHVHKESEQPRA).

This is Protein HIT1 (HIT1) from Saccharomyces cerevisiae (strain ATCC 204508 / S288c) (Baker's yeast).